The primary structure comprises 261 residues: Imidazole glycerol phosphate synthase subunit HisF (261 aa).

Active-site residues include Asp16 and Asp135.

Belongs to the HisA/HisF family. Heterodimer of HisH and HisF.

The protein resides in the cytoplasm. The enzyme catalyses 5-[(5-phospho-1-deoxy-D-ribulos-1-ylimino)methylamino]-1-(5-phospho-beta-D-ribosyl)imidazole-4-carboxamide + L-glutamine = D-erythro-1-(imidazol-4-yl)glycerol 3-phosphate + 5-amino-1-(5-phospho-beta-D-ribosyl)imidazole-4-carboxamide + L-glutamate + H(+). It participates in amino-acid biosynthesis; L-histidine biosynthesis; L-histidine from 5-phospho-alpha-D-ribose 1-diphosphate: step 5/9. Functionally, IGPS catalyzes the conversion of PRFAR and glutamine to IGP, AICAR and glutamate. The HisF subunit catalyzes the cyclization activity that produces IGP and AICAR from PRFAR using the ammonia provided by the HisH subunit. This Mycobacterium sp. (strain JLS) protein is Imidazole glycerol phosphate synthase subunit HisF.